A 177-amino-acid polypeptide reads, in one-letter code: Basic form of pathogenesis-related protein 1 (177 aa).

The signal sequence occupies residues 1 to 23 (MGFLTTIVACFITFAILIHSSKA). Glutamine 24 carries the post-translational modification Pyrrolidone carboxylic acid. One can recognise an SCP domain in the interval 31–147 (LNPHNAARRQ…NGWFFITCNY (117 aa)).

This sequence belongs to the CRISP family. In terms of processing, two disulfide bonds are present.

Functionally, probably involved in the defense reaction of plants against pathogens. This chain is Basic form of pathogenesis-related protein 1, found in Nicotiana tabacum (Common tobacco).